Reading from the N-terminus, the 1400-residue chain is Clustered mitochondria protein homolog (1400 aa).

Disordered regions lie at residues 1–39 (MVSK…KEAS), 56–78 (GHDQ…QAED), and 212–243 (GDTG…KERP). The span at 56–69 (GHDQAEEADSKQDG) shows a compositional bias: basic and acidic residues. The Clu domain maps to 380 to 622 (RAEDAYTSRL…RTFPPDLNFL (243 aa)). The interval 684-741 (AALQDSNAAGAGSENKPLALESCDGTPDSPTSSESTLTPEDSEATTVSENSSAENQEA) is disordered. The segment covering 707 to 722 (DGTPDSPTSSESTLTP) has biased composition (low complexity). The segment covering 727 to 741 (ATTVSENSSAENQEA) has biased composition (polar residues). TPR repeat units lie at residues 1088–1121 (AFHF…FNNV), 1130–1163 (CACL…SERV), 1172–1205 (IQEY…MLVV), and 1214–1247 (ALLD…NTKY). The span at 1377–1388 (QDSGKIQEQQGS) shows a compositional bias: polar residues. Residues 1377–1400 (QDSGKIQEQQGSHLELDDKLPVDD) are disordered. Basic and acidic residues predominate over residues 1390-1400 (LELDDKLPVDD).

This sequence belongs to the CLU family.

The protein resides in the cytoplasm. Functionally, mRNA-binding protein involved in proper cytoplasmic distribution of mitochondria. This chain is Clustered mitochondria protein homolog, found in Danio rerio (Zebrafish).